Reading from the N-terminus, the 801-residue chain is uncharacterized protein (801 aa).

One can recognise a PE domain in the interval 1-93 (MSWVMVSPEL…GGAYAAAEAA (93 aa)).

The protein belongs to the mycobacterial PE family. PGRS subfamily.

This is an uncharacterized protein from Mycobacterium tuberculosis (strain ATCC 25618 / H37Rv).